Reading from the N-terminus, the 123-residue chain is uncharacterized protein (123 aa).

This is an uncharacterized protein from Shigella boydii serotype 4 (strain Sb227).